Here is a 102-residue protein sequence, read N- to C-terminus: NADH-quinone oxidoreductase subunit K (102 aa).

3 helical membrane passes run Leu6 to Ala26, Ile30 to Ala50, and Met63 to Leu83.

It belongs to the complex I subunit 4L family. As to quaternary structure, NDH-1 is composed of 14 different subunits. Subunits NuoA, H, J, K, L, M, N constitute the membrane sector of the complex.

It localises to the cell inner membrane. It carries out the reaction a quinone + NADH + 5 H(+)(in) = a quinol + NAD(+) + 4 H(+)(out). In terms of biological role, NDH-1 shuttles electrons from NADH, via FMN and iron-sulfur (Fe-S) centers, to quinones in the respiratory chain. The immediate electron acceptor for the enzyme in this species is believed to be ubiquinone. Couples the redox reaction to proton translocation (for every two electrons transferred, four hydrogen ions are translocated across the cytoplasmic membrane), and thus conserves the redox energy in a proton gradient. In Rhodopseudomonas palustris (strain BisA53), this protein is NADH-quinone oxidoreductase subunit K.